A 233-amino-acid polypeptide reads, in one-letter code: Segregation and condensation protein A (233 aa).

The protein belongs to the ScpA family. In terms of assembly, component of a cohesin-like complex composed of ScpA, ScpB and the Smc homodimer, in which ScpA and ScpB bind to the head domain of Smc. The presence of the three proteins is required for the association of the complex with DNA.

The protein localises to the cytoplasm. Functionally, participates in chromosomal partition during cell division. May act via the formation of a condensin-like complex containing Smc and ScpB that pull DNA away from mid-cell into both cell halves. This Streptococcus pyogenes serotype M1 protein is Segregation and condensation protein A.